The chain runs to 275 residues: Phosphonoacetaldehyde hydrolase (275 aa).

Residue Asp-15 is the Nucleophile of the active site. The Mg(2+) site is built by Asp-15 and Ala-17. The active-site Schiff-base intermediate with substrate is Lys-56. Asp-189 lines the Mg(2+) pocket.

This sequence belongs to the HAD-like hydrolase superfamily. PhnX family. As to quaternary structure, homodimer. It depends on Mg(2+) as a cofactor.

The enzyme catalyses phosphonoacetaldehyde + H2O = acetaldehyde + phosphate + H(+). Its function is as follows. Involved in phosphonate degradation. This is Phosphonoacetaldehyde hydrolase from Pseudomonas entomophila (strain L48).